The chain runs to 157 residues: Small ribosomal subunit protein uS9 (157 aa).

It belongs to the universal ribosomal protein uS9 family.

The sequence is that of Small ribosomal subunit protein uS9 from Caulobacter vibrioides (strain ATCC 19089 / CIP 103742 / CB 15) (Caulobacter crescentus).